The following is a 368-amino-acid chain: Ceramide synthase hyl-1 (368 aa).

The next 7 membrane-spanning stretches (helical) occupy residues 27-47, 92-112, 138-158, 165-185, 191-211, 225-245, and 275-295; these read FVDL…RILW, ILEC…GLYV, IWWY…GSTF, FWQL…SWTI, GTLI…GKLV, FVLF…FIVI, and LIVF…FIIL. A TLC domain is found at 90–303; that stretch reads KKILECFWRF…ILRIAYRTST (214 aa). The disordered stretch occupies residues 306 to 368; the sequence is QAKDVRSDSD…ARHRRAPRKE (63 aa). Over residues 343 to 353 the composition is skewed to acidic residues; sequence TDDDDDEGEEE. Basic residues predominate over residues 357-368; that stretch reads RKARHRRAPRKE.

Belongs to the sphingosine N-acyltransferase family.

The protein localises to the membrane. It catalyses the reaction a very long-chain fatty acyl-CoA + a sphingoid base = an N-(very-long-chain fatty acyl)-sphingoid base + CoA + H(+). The catalysed reaction is 15-methylhexadecasphinganine + a fatty acyl-CoA = an N-acyl-15-methylhexadecasphinganine + CoA + H(+). The enzyme catalyses a fatty acyl-CoA + sphinganine = an N-acylsphinganine + CoA + H(+). It carries out the reaction sphinganine + tetradecanoyl-CoA = N-(tetradecanoyl)-sphinganine + CoA + H(+). It catalyses the reaction hexacosanoyl-CoA + sphinganine = N-hexacosanoylsphinganine + CoA + H(+). Its pathway is lipid metabolism; sphingolipid metabolism. In terms of biological role, catalyzes the acylation of sphingoid bases to form ceramides, which are key players in cell signaling events such as extending lifespan and enhancing stress resistance. C.elegans contain specific sphingoid bases, which are unique or different in structure compared to the sphingoid bases found in other animals. Two examples of these distinctive compounds are: 15-methylhexadecasphinganine and 15-methylhexadecasphing-4-enine. Exhibits substrate preference for fatty acyl-coA chains containing carbon chain length (C16-C18) and very long chains (24 carbons and more). In Caenorhabditis elegans, this protein is Ceramide synthase hyl-1 (hyl-1).